The chain runs to 566 residues: MEIIFGRNKKEQLEPLRATVTGSIPAWLQGTLLRNGPGMHTVGDSKYNHWFDGLALLHSFSIRDGEVFYRSKYLQSDTYNANIEANRIVVSEFGTMAYPDPCKNIFSKAFSYLSHTIPDFTDNCLINIMKCGEDFYATTETNYIRKIDPQTLETLEKVDYRKYVAVNLATSHPHYDEAGNVLNMGTSIADKGGTKYVMFKIPATAPGSKKKGKNPLKHSEVFCSIPSRSLLSPSYYHSFGVTENYVVFLEQPFKLDILKMATAYMRGVSWASCMTFCKEDKTYIHIIDQKTRKPVPTKFYTDPMVVFHHVNAYEEDGCVLFDVIAYEDNSLYQLFYLANLNKDFEEKSRLTSVPTLRRFAVPLHVDKDAEVGSNLVKVSSTTATALKEKDDHVYCQPEVLYEGLELPRINYAHNGKPYRYIFAAEVQWSPVPTKILKYDVLTKSSLKWSEESCWPAEPLFVPTPGAKDEDDGVILSAIISTDPQKLPFLLILDAKSFTELARASVDVDMHLDLHGLFIPDAGWNAVKQTPAKTQEDENSDHPTGLTAPGLGHGENDFTAGHGGKSL.

Residues H172, H237, H308, and H514 each coordinate Fe cation. The interval 529–566 (TPAKTQEDENSDHPTGLTAPGLGHGENDFTAGHGGKSL) is disordered.

This sequence belongs to the carotenoid oxygenase family. Fe(2+) is required as a cofactor.

Its subcellular location is the cytoplasm. The protein localises to the cytosol. The enzyme catalyses all-trans-beta-carotene + O2 = 2 all-trans-retinal. Its pathway is cofactor metabolism; retinol metabolism. Functionally, symmetrically cleaves beta-carotene into two molecules of retinal using a dioxygenase mechanism. This Rattus norvegicus (Rat) protein is Beta,beta-carotene 15,15'-dioxygenase.